The primary structure comprises 192 residues: Ion-translocating oxidoreductase complex subunit B (192 aa).

Positions 1–26 (MNAIWIAVAAVSLLALAFGAILGYAS) are hydrophobic. One can recognise a 4Fe-4S domain in the interval 32-91 (EDDPVVEKIDEILPQSQCGQCGYPGCRPYAEAISCNGEKINRCAPGGEAVMLKIAELLNV). Residues Cys-49, Cys-52, Cys-57, Cys-74, Cys-117, Cys-120, Cys-123, Cys-127, Cys-147, Cys-150, Cys-153, and Cys-157 each coordinate [4Fe-4S] cluster. 4Fe-4S ferredoxin-type domains are found at residues 108–137 (MVAVIDENNCIGCTKCIQACPVDAIVGATR) and 138–167 (AMHTVMSDLCTGCNLCVDPCPTHCISLQPV).

It belongs to the 4Fe4S bacterial-type ferredoxin family. RnfB subfamily. As to quaternary structure, the complex is composed of six subunits: RsxA, RsxB, RsxC, RsxD, RsxE and RsxG. The cofactor is [4Fe-4S] cluster.

Its subcellular location is the cell inner membrane. Functionally, part of a membrane-bound complex that couples electron transfer with translocation of ions across the membrane. Required to maintain the reduced state of SoxR. The protein is Ion-translocating oxidoreductase complex subunit B of Escherichia coli O81 (strain ED1a).